The chain runs to 31 residues: Histone H1.3 (31 aa).

The protein belongs to the histone H1/H5 family.

The protein resides in the nucleus. The protein localises to the chromosome. Histones H1 are necessary for the condensation of nucleosome chains into higher-order structures. This Triticum aestivum (Wheat) protein is Histone H1.3.